The sequence spans 119 residues: Ribonuclease P protein component (119 aa).

This sequence belongs to the RnpA family. As to quaternary structure, consists of a catalytic RNA component (M1 or rnpB) and a protein subunit.

The catalysed reaction is Endonucleolytic cleavage of RNA, removing 5'-extranucleotides from tRNA precursor.. Functionally, RNaseP catalyzes the removal of the 5'-leader sequence from pre-tRNA to produce the mature 5'-terminus. It can also cleave other RNA substrates such as 4.5S RNA. The protein component plays an auxiliary but essential role in vivo by binding to the 5'-leader sequence and broadening the substrate specificity of the ribozyme. This chain is Ribonuclease P protein component, found in Streptococcus equi subsp. zooepidemicus (strain MGCS10565).